We begin with the raw amino-acid sequence, 68 residues long: ATP synthase protein 8 (68 aa).

A helical membrane pass occupies residues valine 8 to methionine 24. Lysine 54 carries the post-translational modification N6-acetyllysine; alternate. Residue lysine 54 is modified to N6-succinyllysine; alternate. Lysine 57 is modified (N6-acetyllysine).

This sequence belongs to the ATPase protein 8 family. In terms of assembly, F-type ATPases have 2 components, CF(1) - the catalytic core - and CF(0) - the membrane proton channel. Component of an ATP synthase complex composed of ATP5PB, ATP5MC1, ATP5F1E, ATP5PD, ATP5ME, ATP5PF, ATP5MF, MT-ATP6, MT-ATP8, ATP5F1A, ATP5F1B, ATP5F1D, ATP5F1C, ATP5PO, ATP5MG, ATP5MK and ATP5MJ. Interacts with PRICKLE3.

It localises to the mitochondrion membrane. Mitochondrial membrane ATP synthase (F(1)F(0) ATP synthase or Complex V) produces ATP from ADP in the presence of a proton gradient across the membrane which is generated by electron transport complexes of the respiratory chain. F-type ATPases consist of two structural domains, F(1) - containing the extramembraneous catalytic core and F(0) - containing the membrane proton channel, linked together by a central stalk and a peripheral stalk. During catalysis, ATP synthesis in the catalytic domain of F(1) is coupled via a rotary mechanism of the central stalk subunits to proton translocation. Part of the complex F(0) domain. Minor subunit located with subunit a in the membrane. The polypeptide is ATP synthase protein 8 (MT-ATP8) (Hylobates lar (Lar gibbon)).